The sequence spans 742 residues: MEEGFRDRAAFIRGAKDIAKEVKKHAAKKVVKGLDRVQDEYSRRSYSRFEEEDDDDDFPAPSDGYYRGEGTQDEEEGGASSDATEGHDEDDEIYEGEYQGIPGAESGGKGERMADGAPLAGVRGGLSDGEGPPGGRGEAQRRKEREELAQQYEAILRECSHGRFQWTLYFVLGLALMADGVEVFVVGFVLPSAEKDMCLSDSNKGMLGLIVYLGMMVGAFLWGGLADRLGRRQCLLISLSVNSVFAFFSSFVQGYGTFLFCRLLSGVGIGGSIPIVFSYFSEFLAQEKRGEHLSWLCMFWMIGGVYAAAMAWAIIPHYGWSFQMGSAYQFHSWRVFVLVCAFPSVFAIGALTTQPESPRFFLENGKHDEAWMVLKQVHDTNMRAKGHPERVFSVTHIKTIHQEDELIEIQSDTGTWYQRWGVRALSLGGQVWGNFLSCFGPEYRRITLMMMGVWFTMSFSYYGLTVWFPDMIRHLQAVDYASRTKVFPGERVEHVTFNFTLENQIHRGGQYLNDKFIGLRLKSVSFEDSLFEECYFEDVTSSNTFFRNCTFINTVFYNTDLFEYKFVNSRLINSTFLHNKEGCPLDVTGTGEGAYMVYFVSFLGTLAVLPGNIVSALLMDKIGRLRMLAGSSVMSCVSCFFLSFGNSESAMIALLCLFGGVSIASWNALDVLTVELYPSDKRTTAFGFLNALCKLAAVLGISIFTSFVGITKAAPILFASAALALGSSLALKLPETRGQVLQ.

The segment at Met-1–Asp-57 is interaction with SYT1. At Met-1–Tyr-169 the chain is on the cytoplasmic side. The span at Glu-40–Phe-49 shows a compositional bias: basic and acidic residues. The tract at residues Glu-40 to Glu-144 is disordered. Phosphoserine is present on residues Ser-80 and Ser-81. Thr-84 is subject to Phosphothreonine. The span at Val-122–Gly-137 shows a compositional bias: gly residues. Residue Ser-127 is modified to Phosphoserine. A helical membrane pass occupies residues Phe-170 to Leu-190. Residues Pro-191–Gly-205 lie on the Extracellular side of the membrane. The chain crosses the membrane as a helical span at residues Met-206–Ala-226. The Cytoplasmic segment spans residues Asp-227–Gln-233. The helical transmembrane segment at Cys-234 to Gly-254 threads the bilayer. Topologically, residues Tyr-255–Arg-262 are extracellular. A helical membrane pass occupies residues Leu-263–Phe-283. Topologically, residues Leu-284–Ser-294 are cytoplasmic. The chain crosses the membrane as a helical span at residues Trp-295–Ile-315. Over Pro-316–Arg-334 the chain is Extracellular. Residues Val-335 to Pro-355 form a helical membrane-spanning segment. Residues Glu-356–Thr-447 lie on the Cytoplasmic side of the membrane. Residue Ser-393 is modified to Phosphoserine. Residues Leu-448–Phe-468 form a helical membrane-spanning segment. Residues Pro-469 to Tyr-598 lie on the Extracellular side of the membrane. Phosphotyrosine is present on Tyr-480. N-linked (GlcNAc...) asparagine glycans are attached at residues Asn-498, Asn-548, and Asn-573. A helical membrane pass occupies residues Phe-599–Met-619. At Asp-620–Arg-626 the chain is on the cytoplasmic side. A helical transmembrane segment spans residues Met-627–Ser-647. Topologically, residues Glu-648 to Met-651 are extracellular. Residues Ile-652–Leu-672 traverse the membrane as a helical segment. The Cytoplasmic segment spans residues Thr-673–Ala-685. A helical membrane pass occupies residues Phe-686 to Val-708. Residues Gly-709–Lys-712 are Extracellular-facing. The helical transmembrane segment at Ala-713 to Leu-731 threads the bilayer. At Lys-732 to Gln-742 the chain is on the cytoplasmic side.

Belongs to the major facilitator superfamily. Interacts with SYT1/synaptotagmin-1 in a calcium-dependent manner. Binds the adapter protein complex AP-2. Post-translationally, phosphorylation by CK1 of the N-terminal cytoplasmic domain regulates interaction with SYT1. In terms of processing, N-glycosylated.

It localises to the presynapse. The protein resides in the cytoplasmic vesicle. Its subcellular location is the secretory vesicle. The protein localises to the synaptic vesicle membrane. In terms of biological role, plays a role in the control of regulated secretion in neural and endocrine cells, enhancing selectively low-frequency neurotransmission. Positively regulates vesicle fusion by maintaining the readily releasable pool of secretory vesicles. This is Synaptic vesicle glycoprotein 2A (SV2A) from Pongo abelii (Sumatran orangutan).